Consider the following 446-residue polypeptide: 3',5'-cyclic-AMP phosphodiesterase 7B (446 aa).

The PDEase domain occupies 97 to 420 (LDEDYLGQAR…AQWKSLLSNQ (324 aa)). Histidine 173 serves as the catalytic Proton donor. 4 residues coordinate a divalent metal cation: histidine 177, histidine 213, aspartate 214, and aspartate 323. Positions 422-446 (RRRGSGQDLAGPAPETLEQTEGATP) are disordered. Serine 426 carries the post-translational modification Phosphoserine. Threonine 445 is subject to Phosphothreonine.

It belongs to the cyclic nucleotide phosphodiesterase family. PDE7 subfamily. Requires a divalent metal cation as cofactor. In terms of tissue distribution, highly expressed in brain.

The enzyme catalyses 3',5'-cyclic AMP + H2O = AMP + H(+). It functions in the pathway purine metabolism; 3',5'-cyclic AMP degradation; AMP from 3',5'-cyclic AMP: step 1/1. With respect to regulation, inhibited by dipyridamole, IBMX and SCH 51866. Insensitive to zaprinast, rolipram, and milrinone. Its function is as follows. Hydrolyzes the second messenger cAMP, which is a key regulator of many important physiological processes. May be involved in the control of cAMP-mediated neural activity and cAMP metabolism in the brain. This chain is 3',5'-cyclic-AMP phosphodiesterase 7B, found in Mus musculus (Mouse).